The following is a 211-amino-acid chain: uncharacterized protein (211 aa).

Transmembrane regions (helical) follow at residues 22 to 42 (FINFVRIAICIVMVWIGGLKV), 111 to 131 (IIGATIVTVGLLTLSGIWFPV), and 133 to 153 (GMAGGLLTFGMSIVTLSFMIT).

To E.coli YkgB. The protein to H.influenzae HI_0219.

It is found in the cell membrane. This is an uncharacterized protein from Mannheimia haemolytica (Pasteurella haemolytica).